The chain runs to 439 residues: Rho GTPase-activating protein 1 (439 aa).

Position 1 is an N-acetylmethionine (Met-1). Residues 28 to 48 (IDEKNWPSDEMPDFPKSDDSK) are compositionally biased toward basic and acidic residues. The disordered stretch occupies residues 28–52 (IDEKNWPSDEMPDFPKSDDSKSSSP). 4 positions are modified to phosphoserine: Ser-44, Ser-47, Ser-50, and Ser-51. One can recognise a CRAL-TRIO domain in the interval 63-218 (PYYDIARHQI…QVLKYDDFLK (156 aa)). At Tyr-65 the chain carries Phosphotyrosine. Lys-80 carries the N6-acetyllysine modification. Positions 228–238 (PKPMPPRPPLP) match the SH3-binding motif. A Rho-GAP domain is found at 244-431 (VSLQHLQEKN…FLLDHQGELF (188 aa)).

Found in a complex with XPO7, EIF4A1, ARHGAP1, VPS26A, VPS29, VPS35 and SFN. Interacts with BNIPL. As to expression, ubiquitous.

The protein resides in the cytoplasm. Functionally, GTPase activator for the Rho, Rac and Cdc42 proteins, converting them to the putatively inactive GDP-bound state. Cdc42 seems to be the preferred substrate. This Homo sapiens (Human) protein is Rho GTPase-activating protein 1 (ARHGAP1).